The chain runs to 759 residues: Protein MEI2-like 3 (759 aa).

RRM domains follow at residues 166-239 (RTLF…FSIP) and 251-324 (GTLV…HSRP).

In terms of biological role, probable RNA-binding protein that plays a role in meiosis and vegetative growth. The polypeptide is Protein MEI2-like 3 (ML3) (Arabidopsis thaliana (Mouse-ear cress)).